Consider the following 538-residue polypeptide: Putative cysteine ligase BshC (538 aa).

Residues 460-484 (KINEQIELLERMLKRNVEKKHEVEL) adopt a coiled-coil conformation.

The protein belongs to the BshC family.

In terms of biological role, involved in bacillithiol (BSH) biosynthesis. May catalyze the last step of the pathway, the addition of cysteine to glucosamine malate (GlcN-Mal) to generate BSH. The protein is Putative cysteine ligase BshC of Bacillus thuringiensis subsp. konkukian (strain 97-27).